Here is a 140-residue protein sequence, read N- to C-terminus: 3-hydroxyacyl-[acyl-carrier-protein] dehydratase FabZ (140 aa).

Residue His47 is part of the active site.

This sequence belongs to the thioester dehydratase family. FabZ subfamily.

The protein resides in the cytoplasm. The catalysed reaction is a (3R)-hydroxyacyl-[ACP] = a (2E)-enoyl-[ACP] + H2O. Its function is as follows. Involved in unsaturated fatty acids biosynthesis. Catalyzes the dehydration of short chain beta-hydroxyacyl-ACPs and long chain saturated and unsaturated beta-hydroxyacyl-ACPs. The polypeptide is 3-hydroxyacyl-[acyl-carrier-protein] dehydratase FabZ (Streptococcus pyogenes serotype M49 (strain NZ131)).